The chain runs to 330 residues: Thioredoxin domain-containing protein 6 (330 aa).

A Thioredoxin domain is found at 11 to 115 (QVNISTQELW…QKTILDQLEA (105 aa)). Positions 157–303 (ERTCTLAIIK…LFPSLKFSDK (147 aa)) are NDK. A disordered region spans residues 300–330 (FSDKDTEAPQGGEAEATAGPTEALCFPEDVD). The span at 307 to 322 (APQGGEAEATAGPTEA) shows a compositional bias: low complexity.

This sequence belongs to the NDK family. As to quaternary structure, monomer and homodimer. As to expression, detected at very low levels in testis, lung and brain.

The protein localises to the cytoplasm. It is found in the cytoskeleton. Its subcellular location is the cilium axoneme. The protein resides in the dynein axonemal particle. In terms of biological role, may be a regulator of microtubule physiology. The chain is Thioredoxin domain-containing protein 6 from Homo sapiens (Human).